A 69-amino-acid polypeptide reads, in one-letter code: Protein SlyX homolog (69 aa).

This sequence belongs to the SlyX family.

This Pseudomonas paraeruginosa (strain DSM 24068 / PA7) (Pseudomonas aeruginosa (strain PA7)) protein is Protein SlyX homolog.